The sequence spans 147 residues: Hemoglobin subunit beta (147 aa).

The Globin domain occupies 3 to 147 (EWTDSERAII…VVSALGREYH (145 aa)). Heme b-binding residues include H64 and H93.

Belongs to the globin family. In terms of assembly, heterotetramer of two alpha chains and two beta chains. In terms of tissue distribution, red blood cells.

Functionally, involved in oxygen transport from gills to the various peripheral tissues. This is Hemoglobin subunit beta (hbb) from Gadus morhua (Atlantic cod).